We begin with the raw amino-acid sequence, 263 residues long: GTP cyclohydrolase 1 type 2 homolog (263 aa).

A divalent metal cation contacts are provided by histidine 76, histidine 77, aspartate 113, histidine 231, and glutamate 235.

It belongs to the GTP cyclohydrolase I type 2/NIF3 family. As to quaternary structure, homohexamer.

The chain is GTP cyclohydrolase 1 type 2 homolog from Deinococcus radiodurans (strain ATCC 13939 / DSM 20539 / JCM 16871 / CCUG 27074 / LMG 4051 / NBRC 15346 / NCIMB 9279 / VKM B-1422 / R1).